Here is a 73-residue protein sequence, read N- to C-terminus: uncharacterized protein (73 aa).

This is an uncharacterized protein from Escherichia coli (strain K12).